Reading from the N-terminus, the 1393-residue chain is DNA-directed RNA polymerase subunit beta' (1393 aa).

4 residues coordinate Zn(2+): Cys71, Cys73, Cys86, and Cys89. Residues Asp462, Asp464, and Asp466 each contribute to the Mg(2+) site. Positions 811, 885, 892, and 895 each coordinate Zn(2+).

Belongs to the RNA polymerase beta' chain family. As to quaternary structure, the RNAP catalytic core consists of 2 alpha, 1 beta, 1 beta' and 1 omega subunit. When a sigma factor is associated with the core the holoenzyme is formed, which can initiate transcription. It depends on Mg(2+) as a cofactor. Requires Zn(2+) as cofactor.

It catalyses the reaction RNA(n) + a ribonucleoside 5'-triphosphate = RNA(n+1) + diphosphate. Its function is as follows. DNA-dependent RNA polymerase catalyzes the transcription of DNA into RNA using the four ribonucleoside triphosphates as substrates. The protein is DNA-directed RNA polymerase subunit beta' of Azorhizobium caulinodans (strain ATCC 43989 / DSM 5975 / JCM 20966 / LMG 6465 / NBRC 14845 / NCIMB 13405 / ORS 571).